A 306-amino-acid polypeptide reads, in one-letter code: Ribosomal protein L11 methyltransferase (306 aa).

S-adenosyl-L-methionine is bound by residues T152, G179, D201, and N243.

It belongs to the methyltransferase superfamily. PrmA family.

The protein resides in the cytoplasm. It catalyses the reaction L-lysyl-[protein] + 3 S-adenosyl-L-methionine = N(6),N(6),N(6)-trimethyl-L-lysyl-[protein] + 3 S-adenosyl-L-homocysteine + 3 H(+). Methylates ribosomal protein L11. The chain is Ribosomal protein L11 methyltransferase from Geobacter sp. (strain M21).